A 349-amino-acid polypeptide reads, in one-letter code: Heat-inducible transcription repressor HrcA (349 aa).

This sequence belongs to the HrcA family.

Its function is as follows. Negative regulator of class I heat shock genes (grpE-dnaK-dnaJ and groELS operons). Prevents heat-shock induction of these operons. The chain is Heat-inducible transcription repressor HrcA from Lactobacillus acidophilus (strain ATCC 700396 / NCK56 / N2 / NCFM).